The following is a 119-amino-acid chain: ILIGLVFTFVIYLPMAFVQSPLQLGILRFLLGFGAGALMPSVNSLLSKITPKEGVSRIFAYAQMCSNLGMVTGPLVGSAIAGYISYRAAIVGTSLFVIVNIIWSFINFRKYLRKRSIME.

The next 4 helical transmembrane spans lie at 1 to 20 (ILIG…FVQS), 22 to 42 (LQLG…MPSV), 64 to 84 (MCSN…AGYI), and 88 to 108 (AAIV…FINF).

It belongs to the major facilitator superfamily.

The protein localises to the cell membrane. In Lactococcus lactis subsp. cremoris (Streptococcus cremoris), this protein is Multi-drug resistance efflux pump PmrA homolog (pmrA).